A 711-amino-acid chain; its full sequence is Polyribonucleotide nucleotidyltransferase (711 aa).

Mg(2+) is bound by residues D486 and D492. The KH domain maps to 553 to 612; that stretch reads PRIHTIKINPDKIKDVIGKGGSVIRALTEETGTTIEIEDDGTVKIAATDGEKAKHAIRRI. The S1 motif domain maps to 622–690; the sequence is GRVYNGKVTR…RQGRIRLSIK (69 aa). A disordered region spans residues 689-711; it reads IKEATEQSQPAAAPEAPAAEQGE. Over residues 694–711 the composition is skewed to low complexity; that stretch reads EQSQPAAAPEAPAAEQGE.

It belongs to the polyribonucleotide nucleotidyltransferase family. In terms of assembly, component of the RNA degradosome, which is a multiprotein complex involved in RNA processing and mRNA degradation. Requires Mg(2+) as cofactor.

The protein resides in the cytoplasm. It carries out the reaction RNA(n+1) + phosphate = RNA(n) + a ribonucleoside 5'-diphosphate. Involved in mRNA degradation. Catalyzes the phosphorolysis of single-stranded polyribonucleotides processively in the 3'- to 5'-direction. The sequence is that of Polyribonucleotide nucleotidyltransferase from Escherichia coli O6:K15:H31 (strain 536 / UPEC).